We begin with the raw amino-acid sequence, 155 residues long: Small ribosomal subunit protein uS7 (155 aa).

The protein belongs to the universal ribosomal protein uS7 family. As to quaternary structure, part of the 30S ribosomal subunit. Contacts proteins S9 and S11.

One of the primary rRNA binding proteins, it binds directly to 16S rRNA where it nucleates assembly of the head domain of the 30S subunit. Is located at the subunit interface close to the decoding center, probably blocks exit of the E-site tRNA. The chain is Small ribosomal subunit protein uS7 from Thermosipho melanesiensis (strain DSM 12029 / CIP 104789 / BI429).